Consider the following 710-residue polypeptide: MLLAAGTRYAYRLCGRRAAAALQGRAGRSCARSVSTSWSPVGAAFNVKPQGHLWDLLGERRGLFGVPELSTPEGFQVAQEEALRKTEWLVERACSTPPGPQTVLIFDELSDCLCRVADLADFVKIGHPEQAFREAAQEACRSIGTMVEKLNTNVELYQSLQKLLDDKKLMDSLDAETRRVAELFMFDFEISGIHLDEEKRRRAVDLNVKILDLSSAFLMGTNFPIKIQKHLLPEHIQHHFARDGRHLVIDGLHAEASDDLVREAAYKIFLYPNADQLKCLEELLSSRDLLANLVGYLPFPTGPPGTIAQTPETVMQFLEKLSEKLCERTRKDFEMMQGMKTKLNPQNSELMPWDPPYYSGVIRAERYNIEPSLYCPFLSLGACMEGLNVLFNRLLGVTLYAEQPFKGEVWCIDVRKLAVVHESEGLLGYIYCDFFQRANKPQQDCHFTIRGGRLKEDGSYQLPVVVLMLNLPHASRDFPTLLTPGMMENLFHEMGHAMHSMLGRTRYQHVTGTRCPTDFAEVPSILMEYFSNDYRVVSQFAKHYQTGQPLPKAMVSRLCESKKVCAAAEMQLQVFYAALDQIYHGQHPLKKSTTDILMETQEQFYGLPYVPDTAWQLRFSHLVGYGAKYYSYLMSRAVASMVWKECFLQDPFNRAAGERYRREMLAHGGGKEPMLMIQGMLQKCPSIDDFVDALVSDLNLDFETFFMDSK.

A mitochondrion-targeting transit peptide spans 1 to 33; the sequence is MLLAAGTRYAYRLCGRRAAAALQGRAGRSCARS. Lysine 124 is modified (N6-acetyllysine). Histidine 492 contacts Zn(2+). The active site involves glutamate 493. Residues histidine 496 and histidine 499 each contribute to the Zn(2+) site.

It belongs to the peptidase M3 family. As to quaternary structure, monomer. It depends on Zn(2+) as a cofactor.

It is found in the mitochondrion matrix. It carries out the reaction Release of an N-terminal octapeptide as second stage of processing of some proteins imported into the mitochondrion.. Its activity is regulated as follows. Activity is divalent cation-dependent. It is stimulated by manganese, magnesium or calcium ions and reversibly inhibited by zinc, cobalt and iron. Cleaves proteins, imported into the mitochondrion, to their mature size. The polypeptide is Mitochondrial intermediate peptidase (Mipep) (Rattus norvegicus (Rat)).